The chain runs to 550 residues: Glucose-6-phosphate isomerase (550 aa).

The Proton donor role is filled by Glu356. Active-site residues include His387 and Lys515.

The protein belongs to the GPI family.

The protein localises to the cytoplasm. It catalyses the reaction alpha-D-glucose 6-phosphate = beta-D-fructose 6-phosphate. It participates in carbohydrate biosynthesis; gluconeogenesis. Its pathway is carbohydrate degradation; glycolysis; D-glyceraldehyde 3-phosphate and glycerone phosphate from D-glucose: step 2/4. In terms of biological role, catalyzes the reversible isomerization of glucose-6-phosphate to fructose-6-phosphate. The sequence is that of Glucose-6-phosphate isomerase from Vibrio cholerae serotype O1 (strain ATCC 39315 / El Tor Inaba N16961).